The chain runs to 356 residues: Phospho-N-acetylmuramoyl-pentapeptide-transferase (356 aa).

10 helical membrane passes run 3–23, 51–71, 80–100, 114–134, 152–172, 185–205, 227–247, 254–274, 279–299, and 333–353; these read QILFAGAIGLFLTLVGTPLLI, TMGGIAFILATIVAYLLAKVI, GLLVLFLMAGMGLVGFLDDYI, AKMAGQLIVGIAFAVLSLQFP, FGWSIGPVLFCVWALFMILAM, LATGASVMVFGAYTFIGLWQF, PLDLAVVAAALMGACFGFLWW, IFMGDTGSLALGGALAGLAIL, FLLAILGGLFVMITMSVVIQV, and FWIIQGMCVIVGLGLFYAGWA.

The protein belongs to the glycosyltransferase 4 family. MraY subfamily. Requires Mg(2+) as cofactor.

The protein resides in the cell membrane. It catalyses the reaction UDP-N-acetyl-alpha-D-muramoyl-L-alanyl-gamma-D-glutamyl-meso-2,6-diaminopimeloyl-D-alanyl-D-alanine + di-trans,octa-cis-undecaprenyl phosphate = di-trans,octa-cis-undecaprenyl diphospho-N-acetyl-alpha-D-muramoyl-L-alanyl-D-glutamyl-meso-2,6-diaminopimeloyl-D-alanyl-D-alanine + UMP. The protein operates within cell wall biogenesis; peptidoglycan biosynthesis. Its function is as follows. Catalyzes the initial step of the lipid cycle reactions in the biosynthesis of the cell wall peptidoglycan: transfers peptidoglycan precursor phospho-MurNAc-pentapeptide from UDP-MurNAc-pentapeptide onto the lipid carrier undecaprenyl phosphate, yielding undecaprenyl-pyrophosphoryl-MurNAc-pentapeptide, known as lipid I. The protein is Phospho-N-acetylmuramoyl-pentapeptide-transferase of Streptomyces griseus subsp. griseus (strain JCM 4626 / CBS 651.72 / NBRC 13350 / KCC S-0626 / ISP 5235).